Here is a 255-residue protein sequence, read N- to C-terminus: tRNA (guanine-N(1)-)-methyltransferase (255 aa).

Residues glycine 113 and 133–138 each bind S-adenosyl-L-methionine; that span reads IGDYVL.

It belongs to the RNA methyltransferase TrmD family. In terms of assembly, homodimer.

The protein localises to the cytoplasm. It catalyses the reaction guanosine(37) in tRNA + S-adenosyl-L-methionine = N(1)-methylguanosine(37) in tRNA + S-adenosyl-L-homocysteine + H(+). In terms of biological role, specifically methylates guanosine-37 in various tRNAs. In Salmonella choleraesuis (strain SC-B67), this protein is tRNA (guanine-N(1)-)-methyltransferase.